Here is a 241-residue protein sequence, read N- to C-terminus: ATP synthase subunit a (241 aa).

8 consecutive transmembrane segments (helical) span residues 29–49, 54–74, 86–106, 114–134, 153–173, 177–197, 200–220, and 221–241; these read NSSL…LFGI, VIPG…ISII, IPLI…GVLP, HVIV…IVGF, WLAP…PVSL, LAAN…FIVN, IFFT…EVFV, and AILQ…DAVK.

The protein belongs to the ATPase A chain family. As to quaternary structure, F-type ATPases have 2 components, CF(1) - the catalytic core - and CF(0) - the membrane proton channel. CF(1) has five subunits: alpha(3), beta(3), gamma(1), delta(1), epsilon(1). CF(0) has three main subunits: a(1), b(2) and c(9-12). The alpha and beta chains form an alternating ring which encloses part of the gamma chain. CF(1) is attached to CF(0) by a central stalk formed by the gamma and epsilon chains, while a peripheral stalk is formed by the delta and b chains.

The protein localises to the cell inner membrane. Key component of the proton channel; it plays a direct role in the translocation of protons across the membrane. The sequence is that of ATP synthase subunit a from Wolbachia sp. subsp. Drosophila simulans (strain wRi).